The primary structure comprises 516 residues: 3-ketoacyl-CoA synthase 4 (516 aa).

The next 2 membrane-spanning stretches (helical) occupy residues 48-68 (LISNLLTLCLFPLAVVISVEA) and 87-107 (LVSIIICSAILVFGLTVYVMT). The 290-residue stretch at 104–393 (YVMTRPRPVY…FFMTLVVKKL (290 aa)) folds into the FAE domain. Active-site residues include Cys-248, His-327, His-411, His-415, His-444, and Asn-448.

Belongs to the thiolase-like superfamily. Chalcone/stilbene synthases family. In terms of tissue distribution, expressed at low levels in siliques, flowers, leaves and stems.

The protein resides in the membrane. It catalyses the reaction a very-long-chain acyl-CoA + malonyl-CoA + H(+) = a very-long-chain 3-oxoacyl-CoA + CO2 + CoA. It participates in lipid metabolism; fatty acid biosynthesis. The polypeptide is 3-ketoacyl-CoA synthase 4 (Arabidopsis thaliana (Mouse-ear cress)).